We begin with the raw amino-acid sequence, 402 residues long: Endoglucanase 1 (402 aa).

Glutamine 1 carries the post-translational modification Pyrrolidone carboxylic acid. 3 cysteine pairs are disulfide-bonded: cysteine 18–cysteine 24, cysteine 51–cysteine 73, and cysteine 63–cysteine 69. An N-linked (GlcNAc...) asparagine glycan is attached at asparagine 89. Intrachain disulfides connect cysteine 140–cysteine 365, cysteine 172–cysteine 195, cysteine 176–cysteine 194, cysteine 215–cysteine 234, cysteine 223–cysteine 228, and cysteine 239–cysteine 315. Glutamate 197 functions as the Nucleophile in the catalytic mechanism. The active-site Proton donor is the glutamate 202. An N-linked (GlcNAc...) asparagine glycan is attached at asparagine 247.

It belongs to the glycosyl hydrolase 7 (cellulase C) family. As to quaternary structure, monomer.

The protein resides in the secreted. It catalyses the reaction Endohydrolysis of (1-&gt;4)-beta-D-glucosidic linkages in cellulose, lichenin and cereal beta-D-glucans.. Its function is as follows. The biological conversion of cellulose to glucose generally requires three types of hydrolytic enzymes: (1) Endoglucanases which cut internal beta-1,4-glucosidic bonds; (2) Exocellobiohydrolases that cut the disaccharide cellobiose from the non-reducing end of the cellulose polymer chain; (3) Beta-1,4-glucosidases which hydrolyze the cellobiose and other short cello-oligosaccharides to glucose. The protein is Endoglucanase 1 (CEL7B) of Humicola insolens (Soft-rot fungus).